We begin with the raw amino-acid sequence, 86 residues long: Palustrin-3b (86 aa).

Residues 1–22 (MFTLKKPLLLIVLLGIISLSLC) form the signal peptide. Positions 23–36 (EQERNADEDEESEI) are excised as a propeptide. Cysteines 81 and 86 form a disulfide.

As to expression, expressed by the skin glands.

The protein resides in the secreted. Functionally, antimicrobial peptide. The polypeptide is Palustrin-3b (Odorrana versabilis (Chinese bamboo leaf odorous frog)).